The sequence spans 210 residues: DNA-directed RNA polymerase III subunit rpc31 (210 aa).

At serine 103 the chain carries Phosphoserine. The disordered stretch occupies residues 151-210 (KDESSEAAHPNIEEEPDEGLEEEDEDFGDDDDNDYGENYFDNGEGDDYDDYDGDEGAIYE). Acidic residues-rich tracts occupy residues 163–185 (EEEPDEGLEEEDEDFGDDDDNDY) and 193–210 (GEGDDYDDYDGDEGAIYE).

It belongs to the eukaryotic RPC7 RNA polymerase subunit family. As to quaternary structure, component of the RNA polymerase III (Pol III) complex.

The protein resides in the cytoplasm. It is found in the nucleus. In terms of biological role, DNA-dependent RNA polymerase catalyzes the transcription of DNA into RNA using the four ribonucleoside triphosphates as substrates. Specific peripheric component of RNA polymerase III which synthesizes small RNAs, such as 5S rRNA and tRNAs. The chain is DNA-directed RNA polymerase III subunit rpc31 (rpc31) from Schizosaccharomyces pombe (strain 972 / ATCC 24843) (Fission yeast).